The following is a 371-amino-acid chain: Chorismate synthase (371 aa).

Residues arginine 48 and arginine 54 each coordinate NADP(+). Residues 130–132 (RSS), 242–243 (NA), glycine 287, 302–306 (KPTSS), and arginine 328 contribute to the FMN site.

This sequence belongs to the chorismate synthase family. In terms of assembly, homotetramer. Requires FMNH2 as cofactor.

It carries out the reaction 5-O-(1-carboxyvinyl)-3-phosphoshikimate = chorismate + phosphate. It participates in metabolic intermediate biosynthesis; chorismate biosynthesis; chorismate from D-erythrose 4-phosphate and phosphoenolpyruvate: step 7/7. Functionally, catalyzes the anti-1,4-elimination of the C-3 phosphate and the C-6 proR hydrogen from 5-enolpyruvylshikimate-3-phosphate (EPSP) to yield chorismate, which is the branch point compound that serves as the starting substrate for the three terminal pathways of aromatic amino acid biosynthesis. This reaction introduces a second double bond into the aromatic ring system. The sequence is that of Chorismate synthase from Azorhizobium caulinodans (strain ATCC 43989 / DSM 5975 / JCM 20966 / LMG 6465 / NBRC 14845 / NCIMB 13405 / ORS 571).